Consider the following 821-residue polypeptide: Xylosyltransferase 1 (821 aa).

Residues 1-121 (YFSHRPKEKV…PETKSDQVPK (121 aa)) are disordered. The Lumenal portion of the chain corresponds to 1 to 821 (YFSHRPKEKV…GAVKPDGRLR (821 aa)). Over residues 9-25 (KVRTDSNNENSVPKDFE) the composition is skewed to basic and acidic residues. The segment covering 27–36 (VDNSNFAPRT) has biased composition (polar residues). Basic and acidic residues-rich tracts occupy residues 41 to 58 (HQPE…ERLQ) and 76 to 87 (GPKEVLPPREKA). An N-linked (GlcNAc...) asparagine glycan is attached at Asn90. 4 cysteine pairs are disulfide-bonded: Cys122–Cys150, Cys166–Cys407, Cys426–Cys439, and Cys428–Cys437. Residues Val198, Asp226, and 255–257 (TIW) contribute to the UDP-alpha-D-xylose site. The N-linked (GlcNAc...) asparagine glycan is linked to Asn286. 359 to 360 (DW) serves as a coordination point for UDP-alpha-D-xylose. Residues Ser440 and 463–464 (RK) each bind UDP-alpha-D-xylose. Disulfide bonds link Cys540–Cys789 and Cys782–Cys795. An N-linked (GlcNAc...) asparagine glycan is attached at Asn642. The disordered stretch occupies residues 801–821 (SSFSPDPKSELGAVKPDGRLR).

It belongs to the glycosyltransferase 14 family. XylT subfamily. As to quaternary structure, monomer. A divalent metal cation is required as a cofactor. Contains 7 disulfide bonds. Post-translationally, N-glycosylated.

It localises to the golgi apparatus membrane. The enzyme catalyses UDP-alpha-D-xylose + L-seryl-[protein] = 3-O-(beta-D-xylosyl)-L-seryl-[protein] + UDP + H(+). Its pathway is glycan metabolism; chondroitin sulfate biosynthesis. It functions in the pathway glycan metabolism; heparan sulfate biosynthesis. Catalyzes the first step in the biosynthesis of chondroitin sulfate and dermatan sulfate proteoglycans, such as DCN. Transfers D-xylose from UDP-D-xylose to specific serine residues of the core protein. Required for normal maturation of chondrocytes during bone development, normal onset of ossification and normal embryonic and postnatal skeleton development, especially of the long bones. In Rattus norvegicus (Rat), this protein is Xylosyltransferase 1 (Xylt1).